Consider the following 148-residue polypeptide: Macrodomain Ter protein (148 aa).

The protein belongs to the MatP family. As to quaternary structure, homodimer.

The protein resides in the cytoplasm. Its function is as follows. Required for spatial organization of the terminus region of the chromosome (Ter macrodomain) during the cell cycle. Prevents early segregation of duplicated Ter macrodomains during cell division. Binds specifically to matS, which is a 13 bp signature motif repeated within the Ter macrodomain. This chain is Macrodomain Ter protein, found in Pasteurella multocida (strain Pm70).